Here is a 115-residue protein sequence, read N- to C-terminus: uncharacterized protein (115 aa).

This is an uncharacterized protein from Human herpesvirus 6A (strain Uganda-1102) (HHV-6 variant A).